Here is a 453-residue protein sequence, read N- to C-terminus: Cytochrome b-c1 complex subunit 2, mitochondrial (453 aa).

Residues M1–Y14 constitute a mitochondrion transit peptide. N6-acetyllysine is present on residues K66, K199, and K250.

This sequence belongs to the peptidase M16 family. UQCRC2/QCR2 subfamily. As to quaternary structure, component of the ubiquinol-cytochrome c oxidoreductase (cytochrome b-c1 complex, complex III, CIII), a multisubunit enzyme composed of 11 subunits. The complex is composed of 3 respiratory subunits cytochrome b, cytochrome c1 and Rieske protein UQCRFS1, 2 core protein subunits UQCRC1/QCR1 and UQCRC2/QCR2, and 6 low-molecular weight protein subunits UQCRH/QCR6, UQCRB/QCR7, UQCRQ/QCR8, UQCR10/QCR9, UQCR11/QCR10 and subunit 9, the cleavage product of Rieske protein UQCRFS1. The complex exists as an obligatory dimer and forms supercomplexes (SCs) in the inner mitochondrial membrane with NADH-ubiquinone oxidoreductase (complex I, CI) and cytochrome c oxidase (complex IV, CIV), resulting in different assemblies (supercomplex SCI(1)III(2)IV(1) and megacomplex MCI(2)III(2)IV(2)). Interacts with RAB5IF. Interacts with STMP1.

The protein localises to the mitochondrion inner membrane. Its function is as follows. Component of the ubiquinol-cytochrome c oxidoreductase, a multisubunit transmembrane complex that is part of the mitochondrial electron transport chain which drives oxidative phosphorylation. The respiratory chain contains 3 multisubunit complexes succinate dehydrogenase (complex II, CII), ubiquinol-cytochrome c oxidoreductase (cytochrome b-c1 complex, complex III, CIII) and cytochrome c oxidase (complex IV, CIV), that cooperate to transfer electrons derived from NADH and succinate to molecular oxygen, creating an electrochemical gradient over the inner membrane that drives transmembrane transport and the ATP synthase. The cytochrome b-c1 complex catalyzes electron transfer from ubiquinol to cytochrome c, linking this redox reaction to translocation of protons across the mitochondrial inner membrane, with protons being carried across the membrane as hydrogens on the quinol. In the process called Q cycle, 2 protons are consumed from the matrix, 4 protons are released into the intermembrane space and 2 electrons are passed to cytochrome c. The 2 core subunits UQCRC1/QCR1 and UQCRC2/QCR2 are homologous to the 2 mitochondrial-processing peptidase (MPP) subunits beta-MPP and alpha-MPP respectively, and they seem to have preserved their MPP processing properties. May be involved in the in situ processing of UQCRFS1 into the mature Rieske protein and its mitochondrial targeting sequence (MTS)/subunit 9 when incorporated into complex III. The sequence is that of Cytochrome b-c1 complex subunit 2, mitochondrial (UQCRC2) from Bos taurus (Bovine).